The following is an 87-amino-acid chain: U3-theraphotoxin-Cg1b (87 aa).

A signal peptide spans 1–23 (MRTFTLIAILTCAVLVIFHVSAA). The propeptide occupies 24–48 (EELEAQDVIQPEDIFTGVATLEEDR). 3 disulfide bridges follow: Cys-52/Cys-65, Cys-56/Cys-79, and Cys-73/Cys-84.

The protein belongs to the neurotoxin 12 (Hwtx-2) family. 03 (juruin) subfamily. As to expression, expressed by the venom gland.

It localises to the secreted. Its function is as follows. Probable ion channel inhibitor. This chain is U3-theraphotoxin-Cg1b, found in Chilobrachys guangxiensis (Chinese earth tiger tarantula).